Consider the following 179-residue polypeptide: UPF0302 protein BLi02393/BL02764 (179 aa).

This sequence belongs to the UPF0302 family.

The polypeptide is UPF0302 protein BLi02393/BL02764 (Bacillus licheniformis (strain ATCC 14580 / DSM 13 / JCM 2505 / CCUG 7422 / NBRC 12200 / NCIMB 9375 / NCTC 10341 / NRRL NRS-1264 / Gibson 46)).